Reading from the N-terminus, the 1605-residue chain is Ribosome-binding protein 1 (1605 aa).

Over 1-7 (MDIYDTQ) the chain is Lumenal. A helical membrane pass occupies residues 8-28 (TLGVVVFGGFMVVSAIGIFLV). Residues 29–1605 (STFSMKETSY…GSSSKEGTSV (1577 aa)) lie on the Cytoplasmic side of the membrane. The interval 44 to 88 (NQRKEMAKTHHQKGEKKKKEKTVEKKGKTKKKEEKPNGKIPEHDL) is disordered. Basic residues predominate over residues 52 to 63 (THHQKGEKKKKE). Residues 64 to 88 (KTVEKKGKTKKKEEKPNGKIPEHDL) are compositionally biased toward basic and acidic residues. Serine 111 is modified (phosphoserine). Residues 114–150 (SSVGHTPIATVPAMPQEKLASSPKDRKKKEKKVAKVE) are disordered. A Glycyl lysine isopeptide (Lys-Gly) (interchain with G-Cter in SUMO2) cross-link involves residue lysine 148. Phosphoserine occurs at positions 159 and 165. A disordered region spans residues 172–849 (ATPKEVPMVA…PGPPDCDGPL (678 aa)). 61 tandem repeats follow at residues 196-205 (SQGKKGQGAQ), 206-215 (NQAKKGEGAQ), 216-225 (NQGKKGEGAQ), 226-235 (NQAKKGEGAQ), 236-245 (NQAKKGEGAQ), 246-255 (NQGKKGEGAQ), 256-265 (NQAKKGEGGQ), 266-275 (NQAKKGEGAQ), 276-285 (NQGKKGEGAQ), 286-295 (NQGKKGEGAQ), 296-305 (NQAKKGEGAQ), 306-315 (NQAKKGEGAQ), 316-325 (NQGKKGEGAQ), 326-335 (NQSKKGEGAQ), 336-345 (NQAKKGEGGQ), 346-355 (NQAKKGEGAQ), 356-365 (NQAKKGEGAQ), 366-375 (NQAKKGEGVQ), 376-385 (NQAKKGVEGA), 386-395 (QNQGKKGEAN), 396-405 (QNQAKKGEGG), 406-415 (QNQTKKGEGP), 416-425 (QNQGKKGEAA), 426-435 (QKQDKKIEGA), 436-445 (QNQGKKPEGT), 446-455 (SNQGKKGEGA), 456-465 (QNQGKKGEGA), 466-475 (QNQSKKGEGA), 476-485 (QNQAKKGEGG), 486-495 (QNQAKKGEGA), 496-505 (QNQAKKGEGA), 506-515 (QNQAKKGEGV), 516-525 (QNQAKKGVEG), 527-536 (QNQGKKGEAN), 537-546 (QNQAKKGEGG), 547-556 (QNQTKKGEGP), 557-566 (QNQGKKGEAA), 567-576 (QKQDKKIEGA), 577-586 (QNQGKKPEGT), 587-596 (SNQGKKGEGA), 597-606 (QNQGKKGEGA), 607-616 (QNQGKKGEGA), 617-626 (QNQGKKGEGA), 628-637 (NQGKKGEGAQ), 638-647 (NQGKKGEGAQ), 648-657 (NQGKKGEGAQ), 658-667 (NQGKKGEGPQ), 668-677 (NQAKKGEGAQ), 678-687 (NQGKKGEGAQ), 688-697 (NQGKKGEGAQ), 698-707 (NQGKKAEGVQ), 708-717 (SQSKKGEGTQ), 718-727 (NQGKKGDGNP), 729-738 (QGKKGEGASN), 739-748 (QNRKTDTVAN), 749-758 (QGTKQEGVSN), 759-768 (QVKKSEGSPN), 769-778 (QGKKAEGAPN), 779-788 (QGKKKDGSPS), 789-798 (QAKKVDAAAN), and 799-808 (QGKKSEMAPA). The interval 196–808 (SQGKKGQGAQ…QGKKSEMAPA (613 aa)) is 61 X 10 AA tandem repeats of [NSQ]-[NKQVGA]-[GSAQKRT]-[ASGDTK]-[KGTQSAV]-[KGAED]-[EQVGIPTDMA]-[EGVAS]-[AGVPETNS]-[AQNGPTVS]. Residues 197-208 (QGKKGQGAQNQA) are compositionally biased toward low complexity. 4 stretches are compositionally biased toward polar residues: residues 224 to 258 (AQNQAKKGEGAQNQAKKGEGAQNQGKKGEGAQNQA), 274 to 338 (AQNQ…QNQA), 354 to 378 (AQNQAKKGEGAQNQAKKGEGVQNQA), and 385 to 399 (AQNQGKKGEANQNQA). Over residues 420–433 (KKGEAAQKQDKKIE) the composition is skewed to basic and acidic residues. Polar residues-rich tracts occupy residues 435 to 479 (AQNQ…QNQA), 495 to 519 (AQNQAKKGEGAQNQAKKGEGVQNQA), and 526 to 540 (AQNQGKKGEANQNQA). The span at 561 to 574 (KKGEAAQKQDKKIE) shows a compositional bias: basic and acidic residues. Composition is skewed to polar residues over residues 576 to 720 (AQNQ…QNQG) and 736 to 769 (ASNQNRKTDTVANQGTKQEGVSNQVKKSEGSPNQ). Residue serine 786 is modified to Phosphoserine. The segment covering 811 to 821 (QKASMVQSQEA) has biased composition (polar residues). Serine 818 is modified (phosphoserine). Lysine 823 participates in a covalent cross-link: Glycyl lysine isopeptide (Lys-Gly) (interchain with G-Cter in SUMO1). Lysine 1135 carries the post-translational modification N6-acetyllysine. Phosphoserine occurs at positions 1162 and 1178. 2 disordered regions span residues 1460–1481 (MRSHVEDGDVAGSPAVPPAEQD) and 1571–1605 (TTQEQLTKEKDTVKKLQEQLGKAEDGSSSKEGTSV). Basic and acidic residues predominate over residues 1576-1598 (LTKEKDTVKKLQEQLGKAEDGSS).

Widely expressed.

The protein localises to the endoplasmic reticulum membrane. Acts as a ribosome receptor and mediates interaction between the ribosome and the endoplasmic reticulum membrane. This Mus musculus (Mouse) protein is Ribosome-binding protein 1 (Rrbp1).